Reading from the N-terminus, the 133-residue chain is p53 and DNA damage-regulated protein 1 (133 aa).

The protein belongs to the prefoldin subunit beta family. In terms of assembly, component of the PAQosome complex which is responsible for the biogenesis of several protein complexes and which consists of R2TP complex members RUVBL1, RUVBL2, RPAP3 and PIH1D1, URI complex members PFDN2, PFDN6, PDRG1, UXT and URI1 as well as ASDURF, POLR2E and DNAAF10/WDR92.

The protein localises to the cytoplasm. Functionally, may play a role in chaperone-mediated protein folding. This is p53 and DNA damage-regulated protein 1 (Pdrg1) from Mus musculus (Mouse).